The sequence spans 486 residues: Protein nucleotidyltransferase YdiU (486 aa).

ATP is bound by residues Gly90, Gly92, Arg93, Lys113, Asp125, Gly126, Arg176, and Arg183. Asp252 serves as the catalytic Proton acceptor. The Mg(2+) site is built by Asn253 and Asp262. Asp262 serves as a coordination point for ATP.

Belongs to the SELO family. It depends on Mg(2+) as a cofactor. Requires Mn(2+) as cofactor.

It carries out the reaction L-seryl-[protein] + ATP = 3-O-(5'-adenylyl)-L-seryl-[protein] + diphosphate. It catalyses the reaction L-threonyl-[protein] + ATP = 3-O-(5'-adenylyl)-L-threonyl-[protein] + diphosphate. The catalysed reaction is L-tyrosyl-[protein] + ATP = O-(5'-adenylyl)-L-tyrosyl-[protein] + diphosphate. The enzyme catalyses L-histidyl-[protein] + UTP = N(tele)-(5'-uridylyl)-L-histidyl-[protein] + diphosphate. It carries out the reaction L-seryl-[protein] + UTP = O-(5'-uridylyl)-L-seryl-[protein] + diphosphate. It catalyses the reaction L-tyrosyl-[protein] + UTP = O-(5'-uridylyl)-L-tyrosyl-[protein] + diphosphate. Functionally, nucleotidyltransferase involved in the post-translational modification of proteins. It can catalyze the addition of adenosine monophosphate (AMP) or uridine monophosphate (UMP) to a protein, resulting in modifications known as AMPylation and UMPylation. This Pseudomonas putida (strain W619) protein is Protein nucleotidyltransferase YdiU.